A 123-amino-acid polypeptide reads, in one-letter code: Venom protein 29 (123 aa).

The signal sequence occupies residues 1-18; that stretch reads MNKLFLFTLLVTLWSVKG.

In terms of processing, contains 3 disulfide bonds. In terms of tissue distribution, expressed by the venom gland.

It is found in the secreted. The sequence is that of Venom protein 29 from Lychas mucronatus (Chinese swimming scorpion).